Reading from the N-terminus, the 767-residue chain is Protein transport protein Sec23B (767 aa).

At alanine 2 the chain carries N-acetylalanine. Residues cysteine 61, cysteine 66, cysteine 85, and cysteine 88 each coordinate Zn(2+). Lysine 564 carries the N6-acetyllysine modification. The stretch at 634–720 is one Gelsolin-like repeat; sequence PEPVLLDSSS…EHGGSQARFL (87 aa).

It belongs to the SEC23/SEC24 family. SEC23 subfamily. As to quaternary structure, COPII is composed of at least five proteins: the Sec23/24 complex, the Sec13/31 complex and Sar1. Interacts with SAR1A. Ubiquitously expressed.

It is found in the cytoplasmic vesicle. Its subcellular location is the COPII-coated vesicle membrane. The protein localises to the endoplasmic reticulum membrane. The protein resides in the cytoplasm. It localises to the cytosol. Component of the coat protein complex II (COPII) which promotes the formation of transport vesicles from the endoplasmic reticulum (ER). The coat has two main functions, the physical deformation of the endoplasmic reticulum membrane into vesicles and the selection of cargo molecules for their transport to the Golgi complex. This Homo sapiens (Human) protein is Protein transport protein Sec23B.